A 159-amino-acid chain; its full sequence is Phosphopantetheine adenylyltransferase (159 aa).

Threonine 10 contributes to the substrate binding site. ATP-binding positions include 10-11 (TF) and histidine 18. 3 residues coordinate substrate: lysine 42, methionine 74, and arginine 88. ATP-binding positions include 89–91 (GLR), glutamate 99, and 124–130 (WSFISSS).

The protein belongs to the bacterial CoaD family. Homohexamer. Mg(2+) is required as a cofactor.

It is found in the cytoplasm. The enzyme catalyses (R)-4'-phosphopantetheine + ATP + H(+) = 3'-dephospho-CoA + diphosphate. Its pathway is cofactor biosynthesis; coenzyme A biosynthesis; CoA from (R)-pantothenate: step 4/5. In terms of biological role, reversibly transfers an adenylyl group from ATP to 4'-phosphopantetheine, yielding dephospho-CoA (dPCoA) and pyrophosphate. This is Phosphopantetheine adenylyltransferase from Escherichia fergusonii (strain ATCC 35469 / DSM 13698 / CCUG 18766 / IAM 14443 / JCM 21226 / LMG 7866 / NBRC 102419 / NCTC 12128 / CDC 0568-73).